The sequence spans 525 residues: GMP synthase [glutamine-hydrolyzing] (525 aa).

One can recognise a Glutamine amidotransferase type-1 domain in the interval 8–207 (KILILDFGSQ…AVAICGCGTN (200 aa)). The active-site Nucleophile is the Cys-85. Catalysis depends on residues His-181 and Glu-183. Positions 208-400 (WKPSSIIEDA…LGLPYNMLYR (193 aa)) constitute a GMPS ATP-PPase domain. Position 235-241 (235-241 (SGGVDSS)) interacts with ATP.

In terms of assembly, homodimer.

The enzyme catalyses XMP + L-glutamine + ATP + H2O = GMP + L-glutamate + AMP + diphosphate + 2 H(+). The protein operates within purine metabolism; GMP biosynthesis; GMP from XMP (L-Gln route): step 1/1. Catalyzes the synthesis of GMP from XMP. The polypeptide is GMP synthase [glutamine-hydrolyzing] (Shewanella denitrificans (strain OS217 / ATCC BAA-1090 / DSM 15013)).